A 134-amino-acid chain; its full sequence is 4-carboxymuconolactone decarboxylase (134 aa).

It belongs to the carboxymuconolactone decarboxylase family.

The enzyme catalyses (R)-2-(carboxymethyl)-5-oxo-2,5-dihydro-2-furoate + H(+) = (4,5-dihydro-5-oxofuran-2-yl)-acetate + CO2. It functions in the pathway aromatic compound metabolism; beta-ketoadipate pathway; 5-oxo-4,5-dihydro-2-furylacetate from 3-carboxy-cis,cis-muconate: step 2/2. The sequence is that of 4-carboxymuconolactone decarboxylase (pcaC) from Acinetobacter baylyi (strain ATCC 33305 / BD413 / ADP1).